A 379-amino-acid chain; its full sequence is Spermidine/putrescine import ATP-binding protein PotA (379 aa).

An ABC transporter domain is found at 10-240; that stretch reads VTIDQVSKAY…PATDFVAKFI (231 aa). Position 42–49 (42–49) interacts with ATP; that stretch reads GPSGCGKT.

This sequence belongs to the ABC transporter superfamily. Spermidine/putrescine importer (TC 3.A.1.11.1) family. The complex is composed of two ATP-binding proteins (PotA), two transmembrane proteins (PotB and PotC) and a solute-binding protein (PotD).

It is found in the cell inner membrane. The enzyme catalyses ATP + H2O + polyamine-[polyamine-binding protein]Side 1 = ADP + phosphate + polyamineSide 2 + [polyamine-binding protein]Side 1.. In terms of biological role, part of the ABC transporter complex PotABCD involved in spermidine/putrescine import. Responsible for energy coupling to the transport system. The chain is Spermidine/putrescine import ATP-binding protein PotA from Treponema pallidum (strain Nichols).